A 322-amino-acid chain; its full sequence is Cytochrome c biogenesis protein CcsA (322 aa).

Transmembrane regions (helical) follow at residues I9–L29, G44–G64, L71–F91, F97–L117, M143–I163, I225–N245, W254–I274, and A286–L306.

It belongs to the CcmF/CycK/Ccl1/NrfE/CcsA family. May interact with Ccs1.

It is found in the plastid. Its subcellular location is the chloroplast thylakoid membrane. Its function is as follows. Required during biogenesis of c-type cytochromes (cytochrome c6 and cytochrome f) at the step of heme attachment. The chain is Cytochrome c biogenesis protein CcsA from Manihot esculenta (Cassava).